A 280-amino-acid chain; its full sequence is MKTNYEIRYAAHPEDARSYDTKRIRRDFLIEKVFSADEVNMVYSMYDRMVVGGAMPVKEVLKLEAIDPLKAPYFLTRREMGIFNVGGPGVVRAGDAIFQLDYKEALYLGAGDRDVTFESTDAAHPAKFYFNSLAAHRNYPDKKVTKADAVVAEMGTLEGSNHRNINKMLVNQVLPTCQLQMGMTELAPGSVWNTMPAHVHSRRMEAYFYFEVPEEHAVCHFMGEVDETRHVWMKGDQAVLSPEWSIHSAAATHNYTFIWGMGGENLDYGDQDFSLITDLK.

Zn(2+)-binding residues include H198, H200, E205, and H247.

It belongs to the KduI family. The cofactor is Zn(2+).

It catalyses the reaction 5-dehydro-4-deoxy-D-glucuronate = 3-deoxy-D-glycero-2,5-hexodiulosonate. Its pathway is glycan metabolism; pectin degradation; 2-dehydro-3-deoxy-D-gluconate from pectin: step 4/5. Functionally, catalyzes the isomerization of 5-dehydro-4-deoxy-D-glucuronate to 3-deoxy-D-glycero-2,5-hexodiulosonate. This Bacteroides fragilis (strain ATCC 25285 / DSM 2151 / CCUG 4856 / JCM 11019 / LMG 10263 / NCTC 9343 / Onslow / VPI 2553 / EN-2) protein is 4-deoxy-L-threo-5-hexosulose-uronate ketol-isomerase.